Reading from the N-terminus, the 274-residue chain is uncharacterized protein (274 aa).

Basic and acidic residues predominate over residues 1 to 20 (MSLEKSLDEIINERTNGFDH). Disordered stretches follow at residues 1 to 63 (MSLE…HDLD), 148 to 217 (NLKG…EDLD), and 230 to 274 (ASTV…MEAV). The span at 21–44 (KHSRRRGSQNRISKKSRLTYKFKR) shows a compositional bias: basic residues. Residues 45-63 (ASKEHNSSPDDGPWQHDLD) show a composition bias toward basic and acidic residues. The 77-residue stretch at 85–161 (FGVRVENLHY…SEIQISKKSP (77 aa)) folds into the RRM domain. A compositionally biased stretch (polar residues) spans 148-160 (NLKGSEIQISKKS). Composition is skewed to low complexity over residues 181 to 190 (SSRSNRGFNR) and 200 to 211 (RSSSKKSSNNSI). Over residues 230 to 245 (ASTVSSHSSQDFTPSI) the composition is skewed to polar residues. A compositionally biased stretch (acidic residues) spans 263–274 (LTEEMDLQMEAV).

This is an uncharacterized protein from Schizosaccharomyces pombe (strain 972 / ATCC 24843) (Fission yeast).